Here is a 295-residue protein sequence, read N- to C-terminus: Phosphatidylserine decarboxylase proenzyme (295 aa).

Active-site charge relay system; for autoendoproteolytic cleavage activity residues include D113, H169, and S256. S256 (schiff-base intermediate with substrate; via pyruvic acid; for decarboxylase activity) is an active-site residue. S256 is subject to Pyruvic acid (Ser); by autocatalysis.

This sequence belongs to the phosphatidylserine decarboxylase family. PSD-B subfamily. Prokaryotic type II sub-subfamily. Heterodimer of a large membrane-associated beta subunit and a small pyruvoyl-containing alpha subunit. Pyruvate serves as cofactor. Is synthesized initially as an inactive proenzyme. Formation of the active enzyme involves a self-maturation process in which the active site pyruvoyl group is generated from an internal serine residue via an autocatalytic post-translational modification. Two non-identical subunits are generated from the proenzyme in this reaction, and the pyruvate is formed at the N-terminus of the alpha chain, which is derived from the carboxyl end of the proenzyme. The autoendoproteolytic cleavage occurs by a canonical serine protease mechanism, in which the side chain hydroxyl group of the serine supplies its oxygen atom to form the C-terminus of the beta chain, while the remainder of the serine residue undergoes an oxidative deamination to produce ammonia and the pyruvoyl prosthetic group on the alpha chain. During this reaction, the Ser that is part of the protease active site of the proenzyme becomes the pyruvoyl prosthetic group, which constitutes an essential element of the active site of the mature decarboxylase.

It localises to the cell membrane. It catalyses the reaction a 1,2-diacyl-sn-glycero-3-phospho-L-serine + H(+) = a 1,2-diacyl-sn-glycero-3-phosphoethanolamine + CO2. Its pathway is phospholipid metabolism; phosphatidylethanolamine biosynthesis; phosphatidylethanolamine from CDP-diacylglycerol: step 2/2. Its function is as follows. Catalyzes the formation of phosphatidylethanolamine (PtdEtn) from phosphatidylserine (PtdSer). This is Phosphatidylserine decarboxylase proenzyme from Clostridium botulinum (strain 657 / Type Ba4).